Here is a 473-residue protein sequence, read N- to C-terminus: MTNNDKEKQPLLSSINNEDDNGATINIVEPVPWYSNIPQKIKNSMSKETITILIYVVLYVTSGVINSVLLKKVMNKFTNYAFFLSQLTNFGYVPIFGAVTAYKIFFTKDIPQETRDFPTRKFAIMGALDAITGFFVVIGGVSTSGPLQQLLNQAIIPFTMIASFIFLKERYSLIQLGGALVIIGGVVTSLIPSLLGGSSGGNKPFWNFFYLLSVIPGALSNVYKDIGFQAVADMDVWYLQYWDSLYQSIFGLFLFPVNNWLPPPATVKFEQILPFMKEGAECLAGINSIIPSYINGTSSFTATSCTYAPDATITCDDCHNAWIVIILYMTINIIYNIFILLVLKHAGATVYSIANTLRLPLTNIVFSIHFIMGSAVSPFSGLSVAGLVIILVGLGGYRVGSMIKQKKAAAAGGAIKVIPSYGPAGMDNIIPVQKEYIEPKSQAHLRNQFFGKLGINVPEARYRAANNNNYGDA.

At 1-49 (MTNNDKEKQPLLSSINNEDDNGATINIVEPVPWYSNIPQKIKNSMSKET) the chain is on the cytoplasmic side. Residues 50–70 (ITILIYVVLYVTSGVINSVLL) traverse the membrane as a helical segment. Residues 71-80 (KKVMNKFTNY) are Vacuolar-facing. Residues 81–101 (AFFLSQLTNFGYVPIFGAVTA) form a helical membrane-spanning segment. The Cytoplasmic portion of the chain corresponds to 102–121 (YKIFFTKDIPQETRDFPTRK). The helical transmembrane segment at 122–142 (FAIMGALDAITGFFVVIGGVS) threads the bilayer. The Vacuolar segment spans residues 143 to 146 (TSGP). Residues 147-167 (LQQLLNQAIIPFTMIASFIFL) traverse the membrane as a helical segment. Over 168-175 (KERYSLIQ) the chain is Cytoplasmic. A helical transmembrane segment spans residues 176-196 (LGGALVIIGGVVTSLIPSLLG). The Vacuolar portion of the chain corresponds to 197–207 (GSSGGNKPFWN). A helical membrane pass occupies residues 208–228 (FFYLLSVIPGALSNVYKDIGF). At 229–248 (QAVADMDVWYLQYWDSLYQS) the chain is on the cytoplasmic side. A helical transmembrane segment spans residues 249 to 269 (IFGLFLFPVNNWLPPPATVKF). At 270–322 (EQILPFMKEGAECLAGINSIIPSYINGTSSFTATSCTYAPDATITCDDCHNAW) the chain is on the vacuolar side. N-linked (GlcNAc...) asparagine glycosylation occurs at N295. A helical membrane pass occupies residues 323–343 (IVIILYMTINIIYNIFILLVL). At 344–352 (KHAGATVYS) the chain is on the cytoplasmic side. Residues 353–373 (IANTLRLPLTNIVFSIHFIMG) traverse the membrane as a helical segment. Position 374 (S374) is a topological domain, vacuolar. A helical membrane pass occupies residues 375–395 (AVSPFSGLSVAGLVIILVGLG). Topologically, residues 396 to 473 (GYRVGSMIKQ…AANNNNYGDA (78 aa)) are cytoplasmic.

It belongs to the CRT-like transporter family.

Its subcellular location is the vacuole membrane. Functionally, nutrient transporter. Involved in maintaining the osmotic homeostasis of the digestive vacuole. The sequence is that of Crt homolog 1 (crtp1) from Dictyostelium discoideum (Social amoeba).